The following is a 1576-amino-acid chain: ABC transporter ALT5 (1576 aa).

10 consecutive transmembrane segments (helical) span residues 27–47 (LKFE…ILAV), 72–92 (ILGF…TQGT), 99–119 (GLFL…VIVC), 267–287 (LPLS…PILP), 289–309 (LVLI…TGFL), 321–341 (GLIG…SLYW), 387–407 (VLAG…AVIV), 417–437 (GFFA…ATVG), 500–520 (ITAM…TLAA), and 525–545 (VATS…APLG). The 268-residue stretch at 289 to 556 (LVLIGLSISQ…LFQSVAPLMS (268 aa)) folds into the ABC transmembrane type-1 1 domain. An ABC transporter 1 domain is found at 602-834 (FRVVNGSFRW…NGGYLQSLCV (233 aa)). 636 to 643 (GPVGSGKS) lines the ATP pocket. The next 7 membrane-spanning stretches (helical) occupy residues 915 to 935 (VVAL…FAFP), 957 to 977 (FWVG…FLTM), 981 to 1001 (VTSI…AAIM), 1035 to 1054 (LIQF…VLAA), 1060 to 1078 (AAMY…KLYL), 1142 to 1162 (WLLF…VTLV), and 1171 to 1191 (GFAG…ASAM). One can recognise an ABC transmembrane type-1 2 domain in the interval 919–1199 (VAFLASAICY…AMQSYAKLET (281 aa)). Positions 1236-1567 (IKLDGVSASY…SHSKFRALCE (332 aa)) constitute an ABC transporter 2 domain. Residue 1278–1285 (GRSGSGKS) participates in ATP binding.

It belongs to the ABC transporter superfamily. ABCC family. Conjugate transporter (TC 3.A.1.208) subfamily.

It localises to the cell membrane. ABC transporter that may provide the dual role AAL-toxin export and self-protection by allowing the fungus to evade the harmful effect of its own AAL-toxin production. The polypeptide is ABC transporter ALT5 (Alternaria alternata (Alternaria rot fungus)).